Reading from the N-terminus, the 793-residue chain is Peroxidase-like protein (793 aa).

Residues 1-20 (MNLFICHVFLLLLHGYLIIC) form the signal peptide.

The protein belongs to the peroxidase family. In terms of tissue distribution, prismatic layer of shell (at protein level). Expressed primarily in the mantle with highest level in the mantle edge and lower level in the mantle pallium.

It localises to the secreted. This is Peroxidase-like protein from Margaritifera margaritifera (Freshwater pearl mussel).